The primary structure comprises 1189 residues: MSVACVLKRKAVLWQDSFSPHLKQHAQDTANPNMPVVLTSGTGSQAQPQPAANQALAAGTHSSPVPGSIGVAGRSQDDAMVDYFFQRQHGEQLGGGGSGGGGYNNSKHRWPTGDNIHAEHQVRSMDELNHDFQALALEGRAMGEQLLPGKKFWESDDSSKDGPKGIFLGDQWRDSAWGTSDHSVSQPIMVQRRPGQGFHVNSEVNSVLSPRSESGGLGVSMVEYVLSSSPGDSCLRKGGFGPRDAENDENDKGDKKNKGTFDGDKLGDLKEEGDVMDKTNGLPVQNGIDTDVKDFSRTPGNCQNSASEVDLLGPNQNGSEGLAQLASTNGAKPVEDFSNIESQSVPLDPMEHVGMEPLQFDYSGTQVPVDSAAATVGLFDYNSQQQLFQRPNALAVQQLTAAQQQQYALAAAHQPHIAGLAPAAFVPNPYIISAAPPGTDPYAAGLAAAATLGPAVVPHQYYGVTPWGVYPASLFQQQAAAAAAATNSANQQTTQQTQQGQQQVLRGGASQRPLTPNQNQQGQQTDPLVAAAAVNSALAFGQGLAAGMPGYPVLAPAAYYDQTGALVVNAGARNGLGAPVRLVAPAPVIISSSAAQAAVAAAAASANGAAGGLAGTTNGPFRPLGTQQPQPQPQQQPTNNLASSSFYGNNSLSSNSQSSSLFSQGSAQPANTSLGFGSSSSLGATLGSALGGFGTAVANSNTGSGSRRDSLTGSSDLYKRTSSSLTPIGHSFYNGLGFSSSPGPVGMPLPSQGPGHSQTPPPSLSSHGSSSSLNLGGLTNGSGRYISAAPGAEAKYRSASSASSLFSPSSTLFPSSRLRYGMSDVMPSGRSRLLEDFRNNRYPNLQLREIAGHIMEFSQDQHGSRFIQLKLERATPAERQLVFNEILQAAYQLMVDVFGNYVIQKFFEFGSLEQKLALAERIRGHVLSLALQMYGCRVIQKALEFIPPDQQVINEMVRELDGHVLKCVKDQNGNHVVQKCIECVQPQSLQFIIDAFKGQVFALSTHPYGCRVIQRILEHCLPEQTLPILEELHQHTEQLVQDQYGNYVIQHVLEHGRPEDKSKIVAEIRGNVLVLSQHKFASNVVEKCVTHASRTERAMLIDEVCTMNDGPHSALYTMMKDQYANYVVQKMIDVAEPAQRKIVMHKIRPHIATLRKYTYGKHILAKLEKYYMKNGVDLGPICGPPNGII.

5 disordered regions span residues 24 to 65 (QHAQ…SSPV), 233 to 288 (SCLR…QNGI), 491 to 525 (QQTT…GQQT), 614 to 652 (AGTT…NNSL), and 743 to 774 (GPVG…SSLN). The segment covering 45-58 (QAQPQPAANQALAA) has biased composition (low complexity). Positions 250 to 277 (NDKGDKKNKGTFDGDKLGDLKEEGDVMD) are enriched in basic and acidic residues. Over residues 491 to 503 (QQTTQQTQQGQQQ) the composition is skewed to low complexity. Residues 512–525 (RPLTPNQNQQGQQT) are compositionally biased toward polar residues. Composition is skewed to low complexity over residues 627 to 652 (QQPQ…NNSL) and 764 to 774 (LSSHGSSSSLN). Residues 829 to 1171 (GRSRLLEDFR…HILAKLEKYY (343 aa)) form the PUM-HD domain. Pumilio repeat units lie at residues 849 to 884 (EIAG…LVFN), 885 to 920 (EILQ…ALAE), 921 to 958 (RIRG…EMVR), 959 to 994 (ELDG…FIID), 995 to 1030 (AFKG…PILE), 1031 to 1066 (ELHQ…KIVA), 1067 to 1102 (EIRG…MLID), and 1106 to 1145 (TMND…IVMH). The tract at residues 864–868 (SRFIQ) is adenine-nucleotide binding in RNA target. Residues 900 to 904 (NYVIQ) are uracil-nucleotide binding in RNA target. An adenine-nucleotide binding in RNA target region spans residues 936-940 (CRVIQ). The interval 974–978 (NHVVQ) is non-specific-nucleotide binding in RNA target. Residues 1010 to 1014 (CRVIQ) are adenine-nucleotide binding in RNA target. The interval 1046-1050 (NYVIQ) is uracil-nucleotide binding in RNA target. Guanine-nucleotide binding in RNA target regions lie at residues 1082-1086 (SNVVE) and 1083-1086 (NVVE). Residues 1125–1129 (NYVVQ) form a uracil-nucleotide binding in RNA target region.

Detected in embryonic male and female gonads, heart, liver and muscle. Detected in adult brain, testis, ovary, heart, lung, spleen, kidney and muscle.

It localises to the cytoplasm. Its subcellular location is the P-body. The protein localises to the cytoplasmic granule. Functionally, sequence-specific RNA-binding protein that acts as a post-transcriptional repressor by binding the 3'-UTR of mRNA targets. Binds to an RNA consensus sequence, the Pumilio Response Element (PRE), 5'-UGUANAUA-3', that is related to the Nanos Response Element (NRE). Mediates post-transcriptional repression of transcripts via different mechanisms: acts via direct recruitment of the CCR4-POP2-NOT deadenylase leading to translational inhibition and mRNA degradation. Also mediates deadenylation-independent repression by promoting accessibility of miRNAs. This chain is Pumilio homolog 1 (PUM1), found in Gallus gallus (Chicken).